The following is a 69-amino-acid chain: uncharacterized protein (69 aa).

This is an uncharacterized protein from Salmonella paratyphi A (strain ATCC 9150 / SARB42).